Reading from the N-terminus, the 337-residue chain is Phosphate acyltransferase (337 aa).

This sequence belongs to the PlsX family. In terms of assembly, homodimer. Probably interacts with PlsY.

The protein resides in the cytoplasm. The enzyme catalyses a fatty acyl-[ACP] + phosphate = an acyl phosphate + holo-[ACP]. It functions in the pathway lipid metabolism; phospholipid metabolism. Catalyzes the reversible formation of acyl-phosphate (acyl-PO(4)) from acyl-[acyl-carrier-protein] (acyl-ACP). This enzyme utilizes acyl-ACP as fatty acyl donor, but not acyl-CoA. In Aquifex aeolicus (strain VF5), this protein is Phosphate acyltransferase.